Reading from the N-terminus, the 33-residue chain is Cytochrome c oxidase subunit 5B liver, mitochondrial (33 aa).

The protein belongs to the cytochrome c oxidase subunit 5B family. In terms of assembly, component of the cytochrome c oxidase (complex IV, CIV), a multisubunit enzyme composed of 14 subunits. The complex is composed of a catalytic core of 3 subunits MT-CO1, MT-CO2 and MT-CO3, encoded in the mitochondrial DNA, and 11 supernumerary subunits COX4I, COX5A, COX5B, COX6A, COX6B, COX6C, COX7A, COX7B, COX7C, COX8 and NDUFA4, which are encoded in the nuclear genome. The complex exists as a monomer or a dimer and forms supercomplexes (SCs) in the inner mitochondrial membrane with NADH-ubiquinone oxidoreductase (complex I, CI) and ubiquinol-cytochrome c oxidoreductase (cytochrome b-c1 complex, complex III, CIII), resulting in different assemblies (supercomplex SCI(1)III(2)IV(1) and megacomplex MCI(2)III(2)IV(2)).

It localises to the mitochondrion inner membrane. It functions in the pathway energy metabolism; oxidative phosphorylation. Component of the cytochrome c oxidase, the last enzyme in the mitochondrial electron transport chain which drives oxidative phosphorylation. The respiratory chain contains 3 multisubunit complexes succinate dehydrogenase (complex II, CII), ubiquinol-cytochrome c oxidoreductase (cytochrome b-c1 complex, complex III, CIII) and cytochrome c oxidase (complex IV, CIV), that cooperate to transfer electrons derived from NADH and succinate to molecular oxygen, creating an electrochemical gradient over the inner membrane that drives transmembrane transport and the ATP synthase. Cytochrome c oxidase is the component of the respiratory chain that catalyzes the reduction of oxygen to water. Electrons originating from reduced cytochrome c in the intermembrane space (IMS) are transferred via the dinuclear copper A center (CU(A)) of subunit 2 and heme A of subunit 1 to the active site in subunit 1, a binuclear center (BNC) formed by heme A3 and copper B (CU(B)). The BNC reduces molecular oxygen to 2 water molecules using 4 electrons from cytochrome c in the IMS and 4 protons from the mitochondrial matrix. The protein is Cytochrome c oxidase subunit 5B liver, mitochondrial of Oncorhynchus mykiss (Rainbow trout).